The chain runs to 82 residues: Small ribosomal subunit protein eS27 (82 aa).

Residues 37–59 (CPGCFTITTVFSHAQTVVICQGC) form a C4-type zinc finger.

This sequence belongs to the eukaryotic ribosomal protein eS27 family. Component of the small ribosomal subunit (SSU). Mature N.crassa ribosomes consist of a small (40S) and a large (60S) subunit. The 40S small subunit contains 1 molecule of ribosomal RNA (18S rRNA) and at least 32 different proteins. The large 60S subunit contains 3 rRNA molecules (26S, 5.8S and 5S rRNA) and at least 42 different proteins. Requires Zn(2+) as cofactor.

The protein resides in the cytoplasm. Functionally, component of the ribosome, a large ribonucleoprotein complex responsible for the synthesis of proteins in the cell. The small ribosomal subunit (SSU) binds messenger RNAs (mRNAs) and translates the encoded message by selecting cognate aminoacyl-transfer RNA (tRNA) molecules. The large subunit (LSU) contains the ribosomal catalytic site termed the peptidyl transferase center (PTC), which catalyzes the formation of peptide bonds, thereby polymerizing the amino acids delivered by tRNAs into a polypeptide chain. The nascent polypeptides leave the ribosome through a tunnel in the LSU and interact with protein factors that function in enzymatic processing, targeting, and the membrane insertion of nascent chains at the exit of the ribosomal tunnel. The chain is Small ribosomal subunit protein eS27 (crp-6) from Neurospora crassa (strain ATCC 24698 / 74-OR23-1A / CBS 708.71 / DSM 1257 / FGSC 987).